Here is a 341-residue protein sequence, read N- to C-terminus: HTH-type transcriptional repressor PurR (341 aa).

One can recognise an HTH lacI-type domain in the interval 2–56; sequence ATIKDVAKRAGVSTTTVSHVINKTRFVAEETKAAVGAAIKELHYSPSAVARSLKV. Residues 4–23 constitute a DNA-binding region (H-T-H motif); that stretch reads IKDVAKRAGVSTTTVSHVIN. Residues 48–56 mediate DNA binding; it reads SAVARSLKV. Residues Tyr-73, Arg-190, Thr-192, Phe-221, and Asp-275 each contribute to the hypoxanthine site.

Homodimer.

The protein operates within purine metabolism; purine nucleotide biosynthesis [regulation]. Its function is as follows. Is the main repressor of the genes involved in the de novo synthesis of purine nucleotides, regulating purB, purC, purEK, purF, purHD, purL, purMN and guaBA expression. PurR is allosterically activated to bind its cognate DNA by binding the purine corepressors, hypoxanthine or guanine, thereby effecting transcription repression. In Serratia proteamaculans (strain 568), this protein is HTH-type transcriptional repressor PurR.